A 430-amino-acid chain; its full sequence is Enolase (430 aa).

Gln164 contributes to the (2R)-2-phosphoglycerate binding site. Glu208 (proton donor) is an active-site residue. Residues Asp245, Glu288, and Asp315 each contribute to the Mg(2+) site. (2R)-2-phosphoglycerate-binding residues include Lys340, Arg369, Ser370, and Lys391. Catalysis depends on Lys340, which acts as the Proton acceptor.

Belongs to the enolase family. The cofactor is Mg(2+).

Its subcellular location is the cytoplasm. The protein resides in the secreted. The protein localises to the cell surface. It carries out the reaction (2R)-2-phosphoglycerate = phosphoenolpyruvate + H2O. It participates in carbohydrate degradation; glycolysis; pyruvate from D-glyceraldehyde 3-phosphate: step 4/5. Its function is as follows. Catalyzes the reversible conversion of 2-phosphoglycerate (2-PG) into phosphoenolpyruvate (PEP). It is essential for the degradation of carbohydrates via glycolysis. This chain is Enolase, found in Thermococcus kodakarensis (strain ATCC BAA-918 / JCM 12380 / KOD1) (Pyrococcus kodakaraensis (strain KOD1)).